The following is a 376-amino-acid chain: Chaperone protein DnaJ 2 (376 aa).

The J domain occupies 8-72 (DYYEILGVPR…EKRKLYDMYG (65 aa)). Residues 143–219 (GTTVPIEVER…CTGRGYGLVK (77 aa)) form a CR-type zinc finger. Zn(2+) is bound by residues C156, C159, C172, C175, C194, C197, C207, and C210. 4 CXXCXGXG motif repeats span residues 156–163 (CSACGGTG), 172–179 (CPTCGGRG), 194–201 (CPTCGGEG), and 207–214 (CHACTGRG).

It belongs to the DnaJ family. In terms of assembly, homodimer. The cofactor is Zn(2+).

The protein localises to the cytoplasm. Its function is as follows. Participates actively in the response to hyperosmotic and heat shock by preventing the aggregation of stress-denatured proteins and by disaggregating proteins, also in an autonomous, DnaK-independent fashion. Unfolded proteins bind initially to DnaJ; upon interaction with the DnaJ-bound protein, DnaK hydrolyzes its bound ATP, resulting in the formation of a stable complex. GrpE releases ADP from DnaK; ATP binding to DnaK triggers the release of the substrate protein, thus completing the reaction cycle. Several rounds of ATP-dependent interactions between DnaJ, DnaK and GrpE are required for fully efficient folding. Also involved, together with DnaK and GrpE, in the DNA replication of plasmids through activation of initiation proteins. The sequence is that of Chaperone protein DnaJ 2 from Aquifex aeolicus (strain VF5).